A 402-amino-acid chain; its full sequence is MSKLSLSSLDKTHLEGKKVLVRVDFNVPLNEDGQITDDTRIRAAIPTIEYLVNHSAKVILAAHFGRPKGQVNEKMRLTPVAARLSELLGQSVALTNSCIGDEAVAKSNSLSNRDVLLLENVRFFGEEEKNDLEFAQKLASHADMYVNDAFGAAHRAHASTQGVTNYLSPSVAGFLLEKELKYLQGAVDSPNRPLAAIVGGSKVSSKIGVLDSLLDKCDKIMIGGGMIFTFYKARGLDVGKSLVEEDKLELAKDLEAKAKAKGVELLLPTDVVLANEFSPDAESKISQIDSISGNWMGLDIGPDSIKVFQNALAECKTIIWNGPMGVFEFDKFADGTNAIATTLADLSAFSEVCTIIGGGDSVAAVEKAGLAEKMSHISTGGGASLELLEGKILPGVAALNDA.

Substrate-binding positions include 24–26, Arg-40, 63–66, Arg-122, and Arg-155; these read DFN and HFGR. ATP contacts are provided by residues Lys-206, Gly-297, Glu-328, and 358–361; that span reads GGDS.

This sequence belongs to the phosphoglycerate kinase family. As to quaternary structure, monomer.

The protein resides in the cytoplasm. It catalyses the reaction (2R)-3-phosphoglycerate + ATP = (2R)-3-phospho-glyceroyl phosphate + ADP. The protein operates within carbohydrate degradation; glycolysis; pyruvate from D-glyceraldehyde 3-phosphate: step 2/5. The polypeptide is Phosphoglycerate kinase (Prochlorococcus marinus (strain MIT 9301)).